We begin with the raw amino-acid sequence, 416 residues long: Gamma-glutamyl phosphate reductase (416 aa).

The protein belongs to the gamma-glutamyl phosphate reductase family.

The protein resides in the cytoplasm. The catalysed reaction is L-glutamate 5-semialdehyde + phosphate + NADP(+) = L-glutamyl 5-phosphate + NADPH + H(+). It functions in the pathway amino-acid biosynthesis; L-proline biosynthesis; L-glutamate 5-semialdehyde from L-glutamate: step 2/2. In terms of biological role, catalyzes the NADPH-dependent reduction of L-glutamate 5-phosphate into L-glutamate 5-semialdehyde and phosphate. The product spontaneously undergoes cyclization to form 1-pyrroline-5-carboxylate. The chain is Gamma-glutamyl phosphate reductase from Salmonella newport (strain SL254).